Here is a 525-residue protein sequence, read N- to C-terminus: Cytochrome P450 4V2 (525 aa).

A helical membrane pass occupies residues 13 to 33 (LLLWGAASAVSVAGATVLLNI). Heme contacts are provided by Glu329 and Cys467.

It belongs to the cytochrome P450 family. Requires heme as cofactor.

The protein localises to the endoplasmic reticulum membrane. It carries out the reaction dodecanoate + reduced [NADPH--hemoprotein reductase] + O2 = 12-hydroxydodecanoate + oxidized [NADPH--hemoprotein reductase] + H2O + H(+). The enzyme catalyses tetradecanoate + reduced [NADPH--hemoprotein reductase] + O2 = 14-hydroxytetradecanoate + oxidized [NADPH--hemoprotein reductase] + H2O + H(+). The catalysed reaction is hexadecanoate + reduced [NADPH--hemoprotein reductase] + O2 = 16-hydroxyhexadecanoate + oxidized [NADPH--hemoprotein reductase] + H2O + H(+). It catalyses the reaction (5Z,8Z,11Z,14Z,17Z)-eicosapentaenoate + reduced [NADPH--hemoprotein reductase] + O2 = 20-hydroxy-(5Z,8Z,11Z,14Z,17Z)-eicosapentaenoate + oxidized [NADPH--hemoprotein reductase] + H2O + H(+). It carries out the reaction (4Z,7Z,10Z,13Z,16Z,19Z)-docosahexaenoate + reduced [NADPH--hemoprotein reductase] + O2 = 22-hydroxy-(4Z,7Z,10Z,13Z,16Z,19Z)-docosahexaenoate + oxidized [NADPH--hemoprotein reductase] + H2O + H(+). The protein operates within lipid metabolism; fatty acid metabolism. With respect to regulation, inhibited by N-hydroxy-N'-(4-n-butyl-2-methylphenyl formamidine)(HET0016) with an IC(50) of 38 nM. Functionally, a cytochrome P450 monooxygenase involved in fatty acid metabolism in the eye. Catalyzes the omega-hydroxylation of polyunsaturated fatty acids (PUFAs) docosahexaenoate (DHA) and its precursor eicosapentaenoate (EPA), and may contribute to the homeostasis of these retinal PUFAs. Omega hydroxylates saturated fatty acids such as laurate, myristate and palmitate, the catalytic efficiency decreasing in the following order: myristate &gt; laurate &gt; palmitate (C14&gt;C12&gt;C16). Mechanistically, uses molecular oxygen inserting one oxygen atom into a substrate, and reducing the second into a water molecule, with two electrons provided by NADPH via cytochrome P450 reductase (CPR; NADPH-ferrihemoprotein reductase). This chain is Cytochrome P450 4V2 (Cyp4v2), found in Rattus norvegicus (Rat).